The sequence spans 214 residues: Phosphatidylcholine transfer protein (214 aa).

An N-acetylmethionine modification is found at M1. The 212-residue stretch at 1–212 (MAGPAAHFSD…MVKACQNYHK (212 aa)) folds into the START domain. Residues Y72 and R78 each contribute to the a 1,2-diacyl-sn-glycero-3-phosphocholine site. At S139 the chain carries Phosphoserine. An a 1,2-diacyl-sn-glycero-3-phosphocholine-binding site is contributed by Q157.

Interacts with ACOT13/THEM2.

The protein resides in the cytoplasm. Functionally, lipid transfer protein that promotes intermembrane transfer of phosphatidylcholines but no other phospholipids. Binds a single lipid molecule. May play a role in hepatocellular selection and transport of phosphatidylcholines during bile formation. The protein is Phosphatidylcholine transfer protein (Pctp) of Rattus norvegicus (Rat).